A 344-amino-acid chain; its full sequence is MTDSDPTLRPDRLPEDVQATDDRALRPQSLDDFTGQEEARANLRVFIESARRRGEAMDHVLFHGPPGLGKTTLAQIMAKELGVGFRMTSGPVLAKAGDLAAILTNLEAKDVLFIDEIHRLNPVVEEILYPALEDFELDLVIGEGPAARTVRIELQPFTLVGATTRLGLLTTPLRDRFGIPTRLNFYTIAELDQIVARGARLAGIEADPKGTAEIAKRARGTPRIAGRLLRRVIDFAVVEGDGRLTQGIADSALTRLGVDDLGLDGADRRYLSLIAENYHGGPVGIETVAAALAEPRDALEEVIEPFLLQQGLIARTPRGRMLAHKGWTHLGMAPPKRPDQGELI.

Basic and acidic residues predominate over residues 1-25 (MTDSDPTLRPDRLPEDVQATDDRAL). The segment at 1-33 (MTDSDPTLRPDRLPEDVQATDDRALRPQSLDDF) is disordered. The interval 1-186 (MTDSDPTLRP…FGIPTRLNFY (186 aa)) is large ATPase domain (RuvB-L). ATP contacts are provided by residues Leu-25, Arg-26, Gly-67, Lys-70, Thr-71, Thr-72, 133-135 (EDF), Arg-176, Tyr-186, and Arg-223. A Mg(2+)-binding site is contributed by Thr-71. The small ATPAse domain (RuvB-S) stretch occupies residues 187 to 257 (TIAELDQIVA…IADSALTRLG (71 aa)). The interval 260 to 344 (DLGLDGADRR…PKRPDQGELI (85 aa)) is head domain (RuvB-H). Residues Arg-296, Arg-315, and Arg-320 each coordinate DNA.

Belongs to the RuvB family. As to quaternary structure, homohexamer. Forms an RuvA(8)-RuvB(12)-Holliday junction (HJ) complex. HJ DNA is sandwiched between 2 RuvA tetramers; dsDNA enters through RuvA and exits via RuvB. An RuvB hexamer assembles on each DNA strand where it exits the tetramer. Each RuvB hexamer is contacted by two RuvA subunits (via domain III) on 2 adjacent RuvB subunits; this complex drives branch migration. In the full resolvosome a probable DNA-RuvA(4)-RuvB(12)-RuvC(2) complex forms which resolves the HJ.

It is found in the cytoplasm. It carries out the reaction ATP + H2O = ADP + phosphate + H(+). The RuvA-RuvB-RuvC complex processes Holliday junction (HJ) DNA during genetic recombination and DNA repair, while the RuvA-RuvB complex plays an important role in the rescue of blocked DNA replication forks via replication fork reversal (RFR). RuvA specifically binds to HJ cruciform DNA, conferring on it an open structure. The RuvB hexamer acts as an ATP-dependent pump, pulling dsDNA into and through the RuvAB complex. RuvB forms 2 homohexamers on either side of HJ DNA bound by 1 or 2 RuvA tetramers; 4 subunits per hexamer contact DNA at a time. Coordinated motions by a converter formed by DNA-disengaged RuvB subunits stimulates ATP hydrolysis and nucleotide exchange. Immobilization of the converter enables RuvB to convert the ATP-contained energy into a lever motion, pulling 2 nucleotides of DNA out of the RuvA tetramer per ATP hydrolyzed, thus driving DNA branch migration. The RuvB motors rotate together with the DNA substrate, which together with the progressing nucleotide cycle form the mechanistic basis for DNA recombination by continuous HJ branch migration. Branch migration allows RuvC to scan DNA until it finds its consensus sequence, where it cleaves and resolves cruciform DNA. The sequence is that of Holliday junction branch migration complex subunit RuvB from Jannaschia sp. (strain CCS1).